Consider the following 98-residue polypeptide: Co-chaperonin GroES (98 aa).

This sequence belongs to the GroES chaperonin family. In terms of assembly, heptamer of 7 subunits arranged in a ring. Interacts with the chaperonin GroEL.

Its subcellular location is the cytoplasm. In terms of biological role, together with the chaperonin GroEL, plays an essential role in assisting protein folding. The GroEL-GroES system forms a nano-cage that allows encapsulation of the non-native substrate proteins and provides a physical environment optimized to promote and accelerate protein folding. GroES binds to the apical surface of the GroEL ring, thereby capping the opening of the GroEL channel. In Brucella abortus (strain S19), this protein is Co-chaperonin GroES.